A 64-amino-acid chain; its full sequence is Large ribosomal subunit protein bL35 (64 aa).

The segment covering 1-45 (MPKMKTHKGAAKRFKKTGKGKIKRRKAFKSHILTKKTPKRKRNLR) has biased composition (basic residues). A disordered region spans residues 1-64 (MPKMKTHKGA…EEKRIKRLLP (64 aa)).

This sequence belongs to the bacterial ribosomal protein bL35 family.

The chain is Large ribosomal subunit protein bL35 from Natranaerobius thermophilus (strain ATCC BAA-1301 / DSM 18059 / JW/NM-WN-LF).